The primary structure comprises 282 residues: Elongation factor Ts (282 aa).

Residues 80–83 (TDFV) form an involved in Mg(2+) ion dislocation from EF-Tu region.

The protein belongs to the EF-Ts family.

Its subcellular location is the cytoplasm. Its function is as follows. Associates with the EF-Tu.GDP complex and induces the exchange of GDP to GTP. It remains bound to the aminoacyl-tRNA.EF-Tu.GTP complex up to the GTP hydrolysis stage on the ribosome. The protein is Elongation factor Ts of Chlamydia caviae (strain ATCC VR-813 / DSM 19441 / 03DC25 / GPIC) (Chlamydophila caviae).